Consider the following 425-residue polypeptide: Type I restriction enzyme MjaVIII specificity subunit (425 aa).

Belongs to the type-I restriction system S methylase family. As to quaternary structure, the type I restriction/modification system is composed of three polypeptides R, M and S.

In terms of biological role, the specificity (S) subunit of a type I restriction enzyme; this subunit dictates DNA sequence specificity. The M and S subunits together form a methyltransferase (MTase) that methylates A-2 on the top and A-3 on the bottom strand of the sequence 5'-GAYN(5)GTAA-3'. In the presence of the R subunit the complex can also act as an endonuclease, binding to the same target sequence but cutting the DNA some distance from this site. Whether the DNA is cut or modified depends on the methylation state of the target sequence. When the target site is unmodified, the DNA is cut. When the target site is hemimethylated, the complex acts as a maintenance MTase modifying the DNA so that both strands become methylated. After locating a non-methylated recognition site, the enzyme complex serves as a molecular motor that translocates DNA in an ATP-dependent manner until a collision occurs that triggers cleavage. This is Type I restriction enzyme MjaVIII specificity subunit from Methanocaldococcus jannaschii (strain ATCC 43067 / DSM 2661 / JAL-1 / JCM 10045 / NBRC 100440) (Methanococcus jannaschii).